The chain runs to 44 residues: Iota-conotoxin-like R11.11 (44 aa).

4 disulfide bridges follow: Cys5/Cys19, Cys12/Cys22, Cys18/Cys27, and Cys21/Cys36. Residue Arg44 is a propeptide, removed by a carboxypeptidase.

Belongs to the conotoxin I1 superfamily. In terms of tissue distribution, expressed by the venom duct.

It localises to the secreted. Its function is as follows. Iota-conotoxins bind to voltage-gated sodium channels (Nav) and act as agonists by shifting the voltage-dependence of activation to more hyperpolarized levels. Produces general excitatory symptoms. The polypeptide is Iota-conotoxin-like R11.11 (Conus radiatus (Rayed cone)).